The primary structure comprises 119 residues: MARVKGGVVSRKRRKRILKLAKGYYGAKHILFRTAKEQVMNSYYYAYRDRRQKKRDFRKLWITRINAAARMNGLSYSQLMHGLKLADIEVNRKMLADLAVNDAAGFTALADAAKDKLAK.

This sequence belongs to the bacterial ribosomal protein bL20 family.

Functionally, binds directly to 23S ribosomal RNA and is necessary for the in vitro assembly process of the 50S ribosomal subunit. It is not involved in the protein synthesizing functions of that subunit. The polypeptide is Large ribosomal subunit protein bL20 (Streptococcus uberis (strain ATCC BAA-854 / 0140J)).